Here is a 968-residue protein sequence, read N- to C-terminus: Probable histidine kinase 1 (968 aa).

2 coiled-coil regions span residues 89-120 (LLKEQIGLLCQQRKEIEQRKQQILEEQQFQDE) and 169-204 (KERAMQLEKTLEASLQRERSLEEKLEENIKNLQSHT). Positions 372-655 (TMSHEIRSPL…TFSFVLPCKI (284 aa)) constitute a Histidine kinase domain. Phosphohistidine; by autocatalysis is present on His375. The disordered stretch occupies residues 737–757 (STNSASTAHQSNGPSVSRTNK). Polar residues predominate over residues 738 to 754 (TNSASTAHQSNGPSVSR). In terms of domain architecture, Response regulatory spans 818-965 (KILLVEDNKV…NIKECLQQYL (148 aa)). Asp867 is modified (4-aspartylphosphate).

Post-translationally, activation probably requires a transfer of a phosphate group between a His in the transmitter domain and an Asp of the receiver domain.

It catalyses the reaction ATP + protein L-histidine = ADP + protein N-phospho-L-histidine.. Functionally, cytokinin receptor related to bacterial two-component regulators. Functions as a histidine kinase and transmits the stress signal to a downstream MAPK cascade. In Oryza sativa subsp. indica (Rice), this protein is Probable histidine kinase 1.